Here is a 238-residue protein sequence, read N- to C-terminus: Probable transcriptional regulatory protein YeeN (238 aa).

The protein belongs to the TACO1 family. YeeN subfamily.

It localises to the cytoplasm. The protein is Probable transcriptional regulatory protein YeeN of Shigella flexneri.